The primary structure comprises 537 residues: Leucine-rich repeat LGI family member 4 (537 aa).

An N-terminal signal peptide occupies residues 1–19 (MGGAGILLFLLAWAGAGVA). LRR repeat units lie at residues 53–74 (TLLSLSLVRMGVSRLKAGSFLK), 77–98 (SLHLLLFTSNTFSVIEGDAFIG), 101–122 (YLQYLFIEDNKIGSISKNALRG), and 125–146 (SLTHLSLANNHLEALPRFLFRG). The region spanning 158-208 (NPFQCDCRVLWLLQWMPTVNASVGTGACAGPPAVAQIQLNHLDPKKFKCRA) is the LRRCT domain. An N-linked (GlcNAc...) asparagine glycan is attached at asparagine 177. EAR repeat units lie at residues 210 to 252 (ELSW…VWDY), 256 to 298 (RFRP…SRSS), 302 to 349 (RLTP…CRDG), 351 to 394 (GFYP…HWVG), 396 to 439 (RFER…RWDG), 441 to 483 (MFRL…RFES), and 487 to 532 (ILEP…QHHE).

Can bind to ADAM11, ADAM22 and ADAM23. As to expression, brain. Expressed in the entire developing peripheral nerves. Strongly expressed in the trigeminal nerve and ganglion and particularly abundant in the boundary cap cells - a transient population of cells that contributes to the Schwann cell population of the dorsal root nerve.

Its subcellular location is the secreted. Functionally, component of Schwann cell signaling pathway(s) that controls axon segregation and myelin formation. This is Leucine-rich repeat LGI family member 4 (Lgi4) from Mus musculus (Mouse).